We begin with the raw amino-acid sequence, 376 residues long: Heterodimeric geranylgeranyl pyrophosphate synthase large subunit 2 (376 aa).

The first 24 residues, 1–24 (MEPQILFLYLSLFILSLNFFFTNL), serve as a signal peptide directing secretion. 3 residues coordinate isopentenyl diphosphate: Lys125, Arg128, and His157. Mg(2+)-binding residues include Asp164 and Asp170. Residue Arg175 coordinates dimethylallyl diphosphate. An isopentenyl diphosphate-binding site is contributed by Arg176. Lys261, Thr262, Gln299, Lys316, and Lys326 together coordinate dimethylallyl diphosphate.

The protein belongs to the FPP/GGPP synthase family. In terms of assembly, monomer. Part of a heterodimeric geranyl(geranyl)diphosphate synthase. Interacts with GGR. Requires Mg(2+) as cofactor. Mainly expressed in flowers.

Its subcellular location is the endoplasmic reticulum. The catalysed reaction is isopentenyl diphosphate + dimethylallyl diphosphate = (2E)-geranyl diphosphate + diphosphate. The enzyme catalyses isopentenyl diphosphate + (2E)-geranyl diphosphate = (2E,6E)-farnesyl diphosphate + diphosphate. It catalyses the reaction isopentenyl diphosphate + (2E,6E)-farnesyl diphosphate = (2E,6E,10E)-geranylgeranyl diphosphate + diphosphate. It functions in the pathway isoprenoid biosynthesis; farnesyl diphosphate biosynthesis; farnesyl diphosphate from geranyl diphosphate and isopentenyl diphosphate: step 1/1. It participates in isoprenoid biosynthesis; geranyl diphosphate biosynthesis; geranyl diphosphate from dimethylallyl diphosphate and isopentenyl diphosphate: step 1/1. The protein operates within isoprenoid biosynthesis; geranylgeranyl diphosphate biosynthesis; geranylgeranyl diphosphate from farnesyl diphosphate and isopentenyl diphosphate: step 1/1. Its function is as follows. Heterodimeric geranyl(geranyl)-diphosphate (GPP) synthase large subunit. In vitro, the large subunit catalyzes mainly the trans-addition of the three molecules of IPP onto DMAPP to form geranylgeranyl pyrophosphate while the small subunit alone is inactive. Upon association of the two subunits, the product profile is not changed. The sequence is that of Heterodimeric geranylgeranyl pyrophosphate synthase large subunit 2 (GGPPS2) from Arabidopsis thaliana (Mouse-ear cress).